Consider the following 250-residue polypeptide: Probable transcriptional regulatory protein Cvib_1432 (250 aa).

This sequence belongs to the TACO1 family.

It localises to the cytoplasm. The sequence is that of Probable transcriptional regulatory protein Cvib_1432 from Chlorobium phaeovibrioides (strain DSM 265 / 1930) (Prosthecochloris vibrioformis (strain DSM 265)).